We begin with the raw amino-acid sequence, 331 residues long: Glyceraldehyde-3-phosphate dehydrogenase, cytosolic (331 aa).

NAD(+) is bound by residues 12 to 13 (RI), Asp34, and Arg78. D-glyceraldehyde 3-phosphate-binding positions include 149-151 (SCT), Thr180, 209-210 (TG), and Arg232. Cys150 (nucleophile) is an active-site residue. Asn314 is a binding site for NAD(+).

The protein belongs to the glyceraldehyde-3-phosphate dehydrogenase family. Homotetramer.

The protein resides in the cytoplasm. The catalysed reaction is D-glyceraldehyde 3-phosphate + phosphate + NAD(+) = (2R)-3-phospho-glyceroyl phosphate + NADH + H(+). It participates in carbohydrate degradation; glycolysis; pyruvate from D-glyceraldehyde 3-phosphate: step 1/5. The polypeptide is Glyceraldehyde-3-phosphate dehydrogenase, cytosolic (Trypanosoma brucei brucei).